Consider the following 360-residue polypeptide: Peptide chain release factor 1 (360 aa).

Gln235 carries the post-translational modification N5-methylglutamine. Basic and acidic residues predominate over residues 283–293 (EREAQAKEASA). The disordered stretch occupies residues 283–305 (EREAQAKEASARKSLIGSGDRSD).

This sequence belongs to the prokaryotic/mitochondrial release factor family. In terms of processing, methylated by PrmC. Methylation increases the termination efficiency of RF1.

It localises to the cytoplasm. Functionally, peptide chain release factor 1 directs the termination of translation in response to the peptide chain termination codons UAG and UAA. In Ralstonia pickettii (strain 12J), this protein is Peptide chain release factor 1.